The chain runs to 408 residues: tRNA-specific 2-thiouridylase MnmA (408 aa).

Residues 20 to 27 (AMSGGVDS) and leucine 46 each bind ATP. Cysteine 114 acts as the Nucleophile in catalysis. Cysteines 114 and 210 form a disulfide. Glycine 138 contributes to the ATP binding site. Residues 160 to 162 (RDQ) form an interaction with tRNA region. Cysteine 210 serves as the catalytic Cysteine persulfide intermediate.

This sequence belongs to the MnmA/TRMU family.

Its subcellular location is the cytoplasm. It carries out the reaction S-sulfanyl-L-cysteinyl-[protein] + uridine(34) in tRNA + AH2 + ATP = 2-thiouridine(34) in tRNA + L-cysteinyl-[protein] + A + AMP + diphosphate + H(+). Its function is as follows. Catalyzes the 2-thiolation of uridine at the wobble position (U34) of tRNA, leading to the formation of s(2)U34. In Bartonella quintana (strain Toulouse) (Rochalimaea quintana), this protein is tRNA-specific 2-thiouridylase MnmA.